A 24-amino-acid polypeptide reads, in one-letter code: Brevinin-1 (24 aa).

A disulfide bond links Cys18 and Cys24.

This sequence belongs to the frog skin active peptide (FSAP) family. Brevinin subfamily. Expressed by the skin glands.

Its subcellular location is the secreted. Shows antibacterial activity against representative Gram-negative and Gram-positive bacterial species, and a very high hemolytic activity. The sequence is that of Brevinin-1 from Pelophylax porosus brevipodus (Nagoya Daruma pond frog).